Here is a 137-residue protein sequence, read N- to C-terminus: Large ribosomal subunit protein uL16 (137 aa).

It belongs to the universal ribosomal protein uL16 family. As to quaternary structure, part of the 50S ribosomal subunit.

Its function is as follows. Binds 23S rRNA and is also seen to make contacts with the A and possibly P site tRNAs. The polypeptide is Large ribosomal subunit protein uL16 (Psychrobacter sp. (strain PRwf-1)).